Here is a 303-residue protein sequence, read N- to C-terminus: GTPase Era (303 aa).

Residues 7–176 (KSGFVAIIGR…LDNVVSHLDE (170 aa)) enclose the Era-type G domain. A G1 region spans residues 15–22 (GRPNVGKS). Residue 15–22 (GRPNVGKS) coordinates GTP. The segment at 41-45 (QTTRN) is G2. Residues 62–65 (DTPG) are G3. GTP contacts are provided by residues 62 to 66 (DTPGV) and 125 to 128 (NKVD). The interval 125–128 (NKVD) is G4. The segment at 155–157 (ISA) is G5. Residues 207–284 (TRQEVPHSVA…FLETWVKVEP (78 aa)) form the KH type-2 domain.

Belongs to the TRAFAC class TrmE-Era-EngA-EngB-Septin-like GTPase superfamily. Era GTPase family. In terms of assembly, monomer.

The protein localises to the cytoplasm. It is found in the cell membrane. Functionally, an essential GTPase that binds both GDP and GTP, with rapid nucleotide exchange. Plays a role in 16S rRNA processing and 30S ribosomal subunit biogenesis and possibly also in cell cycle regulation and energy metabolism. This Leuconostoc citreum (strain KM20) protein is GTPase Era.